Here is a 556-residue protein sequence, read N- to C-terminus: MGGNLGCHRSIPKDPSDLCQKSRKYSAACNFSNILVSQERLNINTATEEELMTLPGVTRQVAQNIVEYREYIGGFKKVEDLALVSGVGAAKLEQVKFEICVSSKGGSSQHSPNSLRKDTEYGQHLSAARLNLNTASASQLMNLRGLTQEMVEDIVQYRSQQGPLKSIEDLVKVDSISPSFLDKIRHQVYVQRSRPSSAHTNGGLHFMAKPHPSPTSISLHSEDLDFPPGGPTQFISTRPPVELFGGEREGKPVLRVATWNLQNCSLDKANNPGVREVVCMTLLENSIKLLAVQELSDKDALEKLCTELNQPSLPNIRKWKGMRGSWKCIISEKSLCGPSEKEEYFGFLWDVSAGIELKNVNLSENMQTNGNGKHMYLQPYIAHFKVGTCDLTLVNIHLSPPTVETVKHQNDTYKSAVFGQALQETLKNERDVIILGCFSLPADSSEFDVLRKEKFHCLLPLNTFTNISTKNPQGNKSLDNIWISKSLKKIFTGYSLVVREGLTNPWIPDNWSWGGVASEHCPVLAEFYMDRDCNKKEMATKANGMTVERNDTKHER.

The region spanning 39 to 68 is the HhH domain; it reads ERLNINTATEEELMTLPGVTRQVAQNIVEY.

This chain is Endonuclease/exonuclease/phosphatase family domain-containing protein 1 (eepd1), found in Xenopus laevis (African clawed frog).